Here is a 455-residue protein sequence, read N- to C-terminus: Protein indeterminate-domain 7 (455 aa).

The segment at 1–52 (MMMNRDILFHQQQQQQMEENMSNLTSASGDQASVSSGNRTETSGSNINQHHQ) is disordered. The span at 17–49 (MEENMSNLTSASGDQASVSSGNRTETSGSNINQ) shows a compositional bias: polar residues. The residue at position 82 (Ser-82) is a Phosphoserine. 2 consecutive C2H2-type zinc fingers follow at residues 92–114 (FICEVCNKGFQRDQNLQLHKRGH) and 134–164 (YVCPEPGCVHHHPSRALGDLTGIKKHFFRKH). Residues 156 to 163 (IKKHFFRK) carry the Nuclear localization signal motif. The C2H2-type 2; degenerate zinc-finger motif lies at 169–192 (WKCEKCSKKYAVQSDWKAHAKTCG). Zn(2+) is bound by residues Cys-171, Cys-174, His-187, Cys-191, Cys-198, Cys-200, His-213, and Cys-217. Residues 196–219 (YKCDCGTLFSRRDSFITHRAFCDA) form a CCHC-type 2; atypical zinc finger. Positions 206–218 (RRDSFITHRAFCD) are SHR-binding. Residues 235 to 351 (QASNSPHHHH…PEEEERSSRS (117 aa)) form a disordered region. Composition is skewed to low complexity over residues 248–265 (QQNIGFSSSSQNIISNSN) and 288–299 (SSNPNPNGNNGN).

It localises to the nucleus. In terms of biological role, probable transcription factor. This is Protein indeterminate-domain 7 from Arabidopsis thaliana (Mouse-ear cress).